The following is a 411-amino-acid chain: Snake venom metalloproteinase ACLF (411 aa).

A signal peptide spans 1-20 (MIQVLLVTLCLAAFPYQGSS). A propeptide spanning residues 21 to 189 (IILESGNVND…KKAFQLNLTP (169 aa)) is cleaved from the precursor. The region spanning 197-393 (RYVELVIVAD…NNPQCILNKP (197 aa)) is the Peptidase M12B domain. 2 residues coordinate Ca(2+): E200 and D284. Cystine bridges form between C308/C388, C348/C372, and C350/C355. H333 provides a ligand contact to Zn(2+). E334 is an active-site residue. Zn(2+) contacts are provided by H337 and H343. Ca(2+) is bound by residues C388, N391, V403, N406, L408, and E410.

Belongs to the venom metalloproteinase (M12B) family. P-I subfamily. As to quaternary structure, monomer. Zn(2+) is required as a cofactor. Expressed by the venom gland.

Its subcellular location is the secreted. Its activity is regulated as follows. Inhibited by EDTA and 1,10-phenanthroline, but not by PMSF. Snake venom zinc metalloprotease that has fibrinolytic activity. The recombinant enzyme cleaves both alpha- and beta-chains of fibrinogen, but not the gamma-chain. The recombinant protein does not produce hemorrhage in mice. Cleaves the peptide substrate Abz-LVEALYQ-EDDnp at the Ala-Leu bond in vitro. The chain is Snake venom metalloproteinase ACLF (ACLPREF) from Agkistrodon contortrix laticinctus (Broad-banded copperhead).